A 245-amino-acid polypeptide reads, in one-letter code: Uracil-DNA glycosylase (245 aa).

The active-site Proton acceptor is the aspartate 82.

The protein belongs to the uracil-DNA glycosylase (UDG) superfamily. UNG family.

Its subcellular location is the cytoplasm. The enzyme catalyses Hydrolyzes single-stranded DNA or mismatched double-stranded DNA and polynucleotides, releasing free uracil.. Its function is as follows. Excises uracil residues from the DNA which can arise as a result of misincorporation of dUMP residues by DNA polymerase or due to deamination of cytosine. This Deinococcus geothermalis (strain DSM 11300 / CIP 105573 / AG-3a) protein is Uracil-DNA glycosylase.